A 313-amino-acid polypeptide reads, in one-letter code: Malate dehydrogenase (313 aa).

NAD(+) is bound by residues 11-16 (GAGNIG) and D35. 2 residues coordinate substrate: R86 and R92. NAD(+)-binding positions include N99 and 122-124 (ISN). Substrate-binding residues include N124 and R155. H179 functions as the Proton acceptor in the catalytic mechanism.

Belongs to the LDH/MDH superfamily. MDH type 3 family.

It catalyses the reaction (S)-malate + NAD(+) = oxaloacetate + NADH + H(+). Functionally, catalyzes the reversible oxidation of malate to oxaloacetate. This chain is Malate dehydrogenase, found in Sorangium cellulosum (strain So ce56) (Polyangium cellulosum (strain So ce56)).